The sequence spans 750 residues: uncharacterized protein (750 aa).

A run of 5 helical transmembrane segments spans residues 2–22 (FVLL…TNVI), 33–53 (SLIL…DIFI), 79–99 (LLVL…VVSL), 116–136 (LSIF…TIML), and 143–163 (IQSL…SPIA). Disordered regions lie at residues 385–461 (DNKG…KKKE) and 571–651 (NKEF…PLTA). Over residues 398-411 (ENTKGDDNSSEKTD) the composition is skewed to basic and acidic residues. Residues 412 to 424 (TVSVSTKLKTTAD) are compositionally biased toward polar residues. Residues 425-436 (QSESTQMSSEST) show a composition bias toward low complexity. The span at 437 to 451 (ATGISSDPQSQGKMN) shows a compositional bias: polar residues. Residues 452 to 461 (NKSEEQKKKE) show a composition bias toward basic and acidic residues. Polar residues predominate over residues 618-629 (DSKGNTATNSDT). Residues 724-744 (ATIVITLFLTVVLLAIAFFFF) traverse the membrane as a helical segment.

The protein to M.pneumoniae MPN_335.

The protein resides in the cell membrane. This is an uncharacterized protein from Mycoplasma pneumoniae (strain ATCC 29342 / M129 / Subtype 1) (Mycoplasmoides pneumoniae).